The chain runs to 664 residues: DNA ligase (664 aa).

Residues 31 to 35, 80 to 81, and Glu110 each bind NAD(+); these read DYEFD and SL. Lys112 acts as the N6-AMP-lysine intermediate in catalysis. Positions 133 and 169 each coordinate NAD(+). The region spanning 237-257 is the BRCT 1 domain; sequence LEKARKWGFKVPAESELKDSI. NAD(+)-binding residues include Lys284 and Lys308. Zn(2+) is bound by residues Cys402, Cys405, Cys420, and Cys426. The 79-residue stretch at 586–664 folds into the BRCT 2 domain; the sequence is NQTNILEGNT…SEEDFLKMLE (79 aa).

This sequence belongs to the NAD-dependent DNA ligase family. LigA subfamily. Mg(2+) is required as a cofactor. Mn(2+) serves as cofactor.

The enzyme catalyses NAD(+) + (deoxyribonucleotide)n-3'-hydroxyl + 5'-phospho-(deoxyribonucleotide)m = (deoxyribonucleotide)n+m + AMP + beta-nicotinamide D-nucleotide.. DNA ligase that catalyzes the formation of phosphodiester linkages between 5'-phosphoryl and 3'-hydroxyl groups in double-stranded DNA using NAD as a coenzyme and as the energy source for the reaction. It is essential for DNA replication and repair of damaged DNA. The chain is DNA ligase from Christiangramia forsetii (strain DSM 17595 / CGMCC 1.15422 / KT0803) (Gramella forsetii).